Here is a 230-residue protein sequence, read N- to C-terminus: Ion-translocating oxidoreductase complex subunit E (230 aa).

A run of 6 helical transmembrane segments spans residues 18–38 (ALVQ…ATNA), 39–59 (LGLG…VSAL), 63–83 (TPAE…VSAV), 86–106 (LINA…PLIV), 125–145 (WLSA…MFVL), and 182–202 (PFLL…MLAV).

Belongs to the NqrDE/RnfAE family. The complex is composed of six subunits: RsxA, RsxB, RsxC, RsxD, RsxE and RsxG.

It is found in the cell inner membrane. Part of a membrane-bound complex that couples electron transfer with translocation of ions across the membrane. Required to maintain the reduced state of SoxR. The chain is Ion-translocating oxidoreductase complex subunit E from Salmonella dublin (strain CT_02021853).